A 136-amino-acid polypeptide reads, in one-letter code: ATP synthase F(0) complex subunit C1, mitochondrial (136 aa).

Residues methionine 1–arginine 61 constitute a mitochondrion transit peptide. The helical transmembrane segment at valine 77–tyrosine 97 threads the bilayer. Lysine 104 bears the N6,N6,N6-trimethyllysine mark. Residues isoleucine 112 to isoleucine 132 form a helical membrane-spanning segment.

It belongs to the ATPase C chain family. As to quaternary structure, homooctamer; the c-ring consists of eight c subunits forming a circle, and each subunit adopts a hairpin shape. Component of the ATP synthase complex composed at least of ATP5F1A/subunit alpha, ATP5F1B/subunit beta, ATP5MC1/subunit c (homooctomer), MT-ATP6/subunit a, MT-ATP8/subunit 8, ATP5ME/subunit e, ATP5MF/subunit f, ATP5MG/subunit g, ATP5MK/subunit k, ATP5MJ/subunit j, ATP5F1C/subunit gamma, ATP5F1D/subunit delta, ATP5F1E/subunit epsilon, ATP5PF/subunit F6, ATP5PB/subunit b, ATP5PD/subunit d, ATP5PO/subunit OSCP. ATP synthase complex consists of a soluble F(1) head domain (subunits alpha(3) and beta(3)) - the catalytic core - and a membrane F(0) domain - the membrane proton channel (subunits c, a, 8, e, f, g, k and j). These two domains are linked by a central stalk (subunits gamma, delta, and epsilon) rotating inside the F1 region and a stationary peripheral stalk (subunits F6, b, d, and OSCP). Interacts with TMEM70 (homooligomer form); this interaction facilitates the oligomer formation of subunit c/ATP5MC1 (c-ring) and the c-ring membrane insertion and also protects ATP5MC1 against intramitochondrial proteolysis. In terms of processing, trimethylated by ATPSCKMT at Lys-104. Methylation is required for proper incorporation of the C subunit into the ATP synthase complex and mitochondrial respiration.

It localises to the mitochondrion membrane. It catalyses the reaction H(+)(in) = H(+)(out). Subunit c, of the mitochondrial membrane ATP synthase complex (F(1)F(0) ATP synthase or Complex V) that produces ATP from ADP in the presence of a proton gradient across the membrane which is generated by electron transport complexes of the respiratory chain. ATP synthase complex consist of a soluble F(1) head domain - the catalytic core - and a membrane F(1) domain - the membrane proton channel. These two domains are linked by a central stalk rotating inside the F(1) region and a stationary peripheral stalk. During catalysis, ATP synthesis in the catalytic domain of F(1) is coupled via a rotary mechanism of the central stalk subunits to proton translocation. With the subunit a (MT-ATP6), forms the proton-conducting channel in the F(0) domain, that contains two crucial half-channels (inlet and outlet) that facilitate proton movement from the mitochondrial intermembrane space (IMS) into the matrix. Protons are taken up via the inlet half-channel and released through the outlet half-channel, following a Grotthuss mechanism. The sequence is that of ATP synthase F(0) complex subunit C1, mitochondrial from Homo sapiens (Human).